The primary structure comprises 512 residues: Kelch repeat protein C2 (512 aa).

In terms of domain architecture, BTB spans 2–67 (ESVIFSINGE…MRWKKINITV (66 aa)). The BACK domain maps to 102 to 176 (CIRMFNFSKR…LLKWIHKNPN (75 aa)). 6 Kelch repeats span residues 216 to 261 (IKHN…LYNC), 262 to 307 (LYII…VNDG), 309 to 354 (LYVI…FVND), 356 to 403 (IYVM…EYDG), 405 to 449 (IYAI…SCGD), and 452 to 498 (LIIA…THKS).

It belongs to the poxviruses Kelch family.

In Camelus, this protein is Kelch repeat protein C2.